A 452-amino-acid chain; its full sequence is Probable V-type proton ATPase subunit H (452 aa).

The protein belongs to the V-ATPase H subunit family. In terms of assembly, V-ATPase is a heteromultimeric enzyme composed of a peripheral catalytic V1 complex (components A to H) attached to an integral membrane V0 proton pore complex (components: a, c, c', c'' and d).

In terms of biological role, subunit of the peripheral V1 complex of vacuolar ATPase. Subunit H activates the ATPase activity of the enzyme and couples ATPase activity to proton flow. Vacuolar ATPase is responsible for acidifying a variety of intracellular compartments in eukaryotic cells, thus providing most of the energy required for transport processes in the vacuolar system. This chain is Probable V-type proton ATPase subunit H, found in Oryza sativa subsp. japonica (Rice).